The following is a 258-amino-acid chain: NAD(P)H-hydrate epimerase (258 aa).

The YjeF N-terminal domain maps to 15–244; the sequence is AFQLDQELMS…RIAKEYGIED (230 aa). Position 75-79 (75-79) interacts with (6S)-NADPHX; it reads NNGGD. Asparagine 76 and aspartate 145 together coordinate K(+). (6S)-NADPHX-binding positions include 149–155 and aspartate 181; that span reads GFSFKPP. Serine 184 lines the K(+) pocket.

Belongs to the NnrE/AIBP family. It depends on K(+) as a cofactor.

The protein resides in the cytoplasm. Its subcellular location is the mitochondrion. The catalysed reaction is (6R)-NADHX = (6S)-NADHX. The enzyme catalyses (6R)-NADPHX = (6S)-NADPHX. In terms of biological role, catalyzes the epimerization of the S- and R-forms of NAD(P)HX, a damaged form of NAD(P)H that is a result of enzymatic or heat-dependent hydration. This is a prerequisite for the S-specific NAD(P)H-hydrate dehydratase to allow the repair of both epimers of NAD(P)HX. In Candida albicans (strain SC5314 / ATCC MYA-2876) (Yeast), this protein is NAD(P)H-hydrate epimerase.